The chain runs to 191 residues: Transcription factor FapR (191 aa).

Residues 102–169 form the MaoC-like domain; that stretch reads GIARGHHLFA…RILVTSHVNQ (68 aa).

The protein belongs to the FapR family.

Functionally, transcriptional factor involved in regulation of membrane lipid biosynthesis by repressing genes involved in fatty acid and phospholipid metabolism. This is Transcription factor FapR from Shouchella clausii (strain KSM-K16) (Alkalihalobacillus clausii).